The chain runs to 237 residues: Uridylate kinase (237 aa).

12–15 (KLSG) is an ATP binding site. The tract at residues 20-25 (GDEGFG) is involved in allosteric activation by GTP. Residue Gly-54 participates in UMP binding. Residues Gly-55 and Arg-59 each contribute to the ATP site. Residues Asp-74 and 135–142 (TGSPFFTT) each bind UMP. Thr-162, Tyr-168, and Asp-171 together coordinate ATP.

This sequence belongs to the UMP kinase family. In terms of assembly, homohexamer.

It localises to the cytoplasm. The catalysed reaction is UMP + ATP = UDP + ADP. It participates in pyrimidine metabolism; CTP biosynthesis via de novo pathway; UDP from UMP (UMPK route): step 1/1. Its activity is regulated as follows. Allosterically activated by GTP. Inhibited by UTP. Functionally, catalyzes the reversible phosphorylation of UMP to UDP. The sequence is that of Uridylate kinase from Actinobacillus pleuropneumoniae serotype 5b (strain L20).